The primary structure comprises 256 residues: Large ribosomal subunit protein uL2 (256 aa).

The tract at residues 208–230 (EHPHGGGNHQHIGKASTVKRGTS) is disordered.

Belongs to the universal ribosomal protein uL2 family. In terms of tissue distribution, in larvae tissues examined: gut, brain imaginal disk, salivary glands, fat body, muscles, epidermis and trachaea.

The protein localises to the cytoplasm. This is Large ribosomal subunit protein uL2 (RpL8) from Drosophila melanogaster (Fruit fly).